We begin with the raw amino-acid sequence, 205 residues long: Small ribosomal subunit protein uS4 (205 aa).

Residues 1 to 16 (MSKRETTKYKIDRRMG) are compositionally biased toward basic and acidic residues. Positions 1–46 (MSKRETTKYKIDRRMGENIWGRPKSPVNRRDYGPGQHGQRRKGKLS) are disordered. Positions 94-157 (SRLDAVIYRA…KQLVLVLESV (64 aa)) constitute an S4 RNA-binding domain.

Belongs to the universal ribosomal protein uS4 family. In terms of assembly, part of the 30S ribosomal subunit. Contacts protein S5. The interaction surface between S4 and S5 is involved in control of translational fidelity.

Its function is as follows. One of the primary rRNA binding proteins, it binds directly to 16S rRNA where it nucleates assembly of the body of the 30S subunit. In terms of biological role, with S5 and S12 plays an important role in translational accuracy. This Bartonella henselae (strain ATCC 49882 / DSM 28221 / CCUG 30454 / Houston 1) (Rochalimaea henselae) protein is Small ribosomal subunit protein uS4.